The chain runs to 334 residues: Anthranilate phosphoribosyltransferase (334 aa).

5-phospho-alpha-D-ribose 1-diphosphate-binding positions include Gly81, 84–85 (GD), Thr89, 91–94 (NIST), 109–117 (KHGSRSVSS), and Ala121. Gly81 contributes to the anthranilate binding site. Residue Ser93 participates in Mg(2+) binding. Arg167 lines the anthranilate pocket. Residues Asp225 and Glu226 each contribute to the Mg(2+) site.

The protein belongs to the anthranilate phosphoribosyltransferase family. In terms of assembly, homodimer. It depends on Mg(2+) as a cofactor.

The enzyme catalyses N-(5-phospho-beta-D-ribosyl)anthranilate + diphosphate = 5-phospho-alpha-D-ribose 1-diphosphate + anthranilate. Its pathway is amino-acid biosynthesis; L-tryptophan biosynthesis; L-tryptophan from chorismate: step 2/5. Functionally, catalyzes the transfer of the phosphoribosyl group of 5-phosphorylribose-1-pyrophosphate (PRPP) to anthranilate to yield N-(5'-phosphoribosyl)-anthranilate (PRA). This Actinobacillus pleuropneumoniae serotype 5b (strain L20) protein is Anthranilate phosphoribosyltransferase.